The following is a 220-amino-acid chain: Protein-methionine-sulfoxide reductase heme-binding subunit MsrQ (220 aa).

The next 6 helical transmembrane spans lie at 20–40 (LWLLYTAGFVPAVWTFYLGAT), 51–71 (FEHLLGLWALRFLILTLLVTP), 86–106 (ALGLLAFYYALMHFTTYMVLD), 122–142 (PFITIGMISLALLVPLALTSN), 153–173 (WSSLHKLVYIAIAGSAVHFLM), and 175–195 (VKSWPAEPVIYAAIVAALLLW).

It belongs to the MsrQ family. In terms of assembly, heterodimer of a catalytic subunit (MsrP) and a heme-binding subunit (MsrQ). The cofactor is FMN. Heme b serves as cofactor.

The protein resides in the cell inner membrane. Part of the MsrPQ system that repairs oxidized periplasmic proteins containing methionine sulfoxide residues (Met-O), using respiratory chain electrons. Thus protects these proteins from oxidative-stress damage caused by reactive species of oxygen and chlorine generated by the host defense mechanisms. MsrPQ is essential for the maintenance of envelope integrity under bleach stress, rescuing a wide series of structurally unrelated periplasmic proteins from methionine oxidation. MsrQ provides electrons for reduction to the reductase catalytic subunit MsrP, using the quinone pool of the respiratory chain. This chain is Protein-methionine-sulfoxide reductase heme-binding subunit MsrQ, found in Brucella melitensis biotype 2 (strain ATCC 23457).